The primary structure comprises 41 residues: Large ribosomal subunit protein bL36 (41 aa).

This sequence belongs to the bacterial ribosomal protein bL36 family.

The chain is Large ribosomal subunit protein bL36 from Ruegeria sp. (strain TM1040) (Silicibacter sp.).